We begin with the raw amino-acid sequence, 911 residues long: SH3 and PX domain-containing protein 2B (911 aa).

One can recognise a PX domain in the interval 5 to 129; sequence RSIVEVKVLD…QFFETRPEDL (125 aa). Tyr25 is subject to Phosphotyrosine. SH3 domains are found at residues 152–211 and 221–280; these read MVLE…GQDG and EEEE…KNSG. Residues 275 to 366 are disordered; the sequence is LKKNSGEPLP…GLNLPKPPIP (92 aa). 2 positions are modified to phosphoserine: Ser279 and Ser291. The segment covering 282–292 has biased composition (pro residues); it reads PLPPKPGPGSP. Positions 311-337 are enriched in basic and acidic residues; sequence GREKELLSSQRDGRFEGRPVPDGDAKQ. Residues 338–347 are compositionally biased toward basic residues; sequence RSPKMRQRPP. The SH3 3 domain maps to 368 to 427; the sequence is QVEEEYYTIAEFQTTIPDGISFQAGLKVEVIEKNLSGWWYIQIEDKEGWAPATFIDKYKK. Residues 458–834 form a disordered region; sequence NTGSEATGPS…GPWGTGKIGE (377 aa). Composition is skewed to basic and acidic residues over residues 486–499, 517–548, 571–586, 598–609, and 618–628; these read KDWKGSKDVLRKAS, EEKPSLPPRKESIIKSEGELLERERERQRTEQ, PARDSRRPEPKPDKSR, CGHKVLAKEVKK, and SKTDLPEEKPD. Phosphoserine is present on residues Ser499 and Ser528. Pro residues-rich tracts occupy residues 643 to 653 and 756 to 766; these read RPKPAPSPKTE and VVPPRRPPPPK. Over residues 822–831 the composition is skewed to gly residues; the sequence is GSLGPWGTGK. At Ser843 the chain carries Phosphoserine. An SH3 4 domain is found at 850–911; that stretch reads LKDSLYVAVA…IPSNYLRKKP (62 aa).

It belongs to the SH3PXD2 family. As to quaternary structure, interacts with ADAM15. Interacts with NOXO1. Interacts (via SH3 domains) with NOXA1; the interaction is direct. Interacts with FASLG. Phosphorylated in SRC-transformed cells. In terms of tissue distribution, expressed in fibroblasts.

The protein localises to the cytoplasm. It localises to the cell projection. It is found in the podosome. Its function is as follows. Adapter protein involved in invadopodia and podosome formation and extracellular matrix degradation. Binds matrix metalloproteinases (ADAMs), NADPH oxidases (NOXs) and phosphoinositides. Acts as an organizer protein that allows NOX1- or NOX3-dependent reactive oxygen species (ROS) generation and ROS localization. Plays a role in mitotic clonal expansion during the immediate early stage of adipocyte differentiation. This chain is SH3 and PX domain-containing protein 2B (SH3PXD2B), found in Homo sapiens (Human).